Consider the following 111-residue polypeptide: Universal stress protein B (111 aa).

Helical transmembrane passes span 1–21 (MIST…NMAR) and 90–110 (FILT…LMIW).

It belongs to the universal stress protein B family.

Its subcellular location is the cell inner membrane. The sequence is that of Universal stress protein B from Cronobacter sakazakii (strain ATCC BAA-894) (Enterobacter sakazakii).